A 317-amino-acid polypeptide reads, in one-letter code: Protein RTA1 (317 aa).

Residues 1–16 (MAKDGFELYRYTPELG) are Extracellular-facing. The helical transmembrane segment at 17–37 (ASILFTVLFAVSGVAFVILLF) threads the bilayer. At 38–64 (HYSVKSKRRVGSLMKSQPVLRYYGTVN) the chain is on the cytoplasmic side. A helical transmembrane segment spans residues 65–85 (LAGAYIPFIFGCFVECVGFAF). Topologically, residues 86-99 (RCKSSKDTTLLNPY) are extracellular. Residues 100-120 (IIQTVFLLVSPTLYAASIYMI) traverse the membrane as a helical segment. At 121–142 (FGRMATLLFAENLMIMPARFNT) the chain is on the cytoplasmic side. A helical transmembrane segment spans residues 143–163 (TIFVIGDVGSLLLQAIGGAMM). The Extracellular segment spans residues 164-178 (SKVTSASSGSHLVTA). Residues 179–199 (GLFIQIAFFGLFIINEVLFIF) traverse the membrane as a helical segment. Residues 200–214 (KMSKKPTNVSVRYGS) lie on the Cytoplasmic side of the membrane. Residues 215-235 (WKYLNIALLVNSFLILIRSIV) form a helical membrane-spanning segment. The Extracellular segment spans residues 236–259 (RAVEFIQGYDGEIASHEWYLYIFD). Residues 260–280 (GLPMFLLVLIFIVAFPLINIF) form a helical membrane-spanning segment. Over 281–317 (RIHEESIQAQQSARFDGTDYPDVEVTSIEEDLASKSE) the chain is Cytoplasmic.

It belongs to the lipid-translocating exporter (LTE) (TC 9.A.26.1) family.

The protein localises to the membrane. Functionally, involved in 7-aminocholesterol resistance. The sequence is that of Protein RTA1 (RTA1) from Saccharomyces cerevisiae (strain ATCC 204508 / S288c) (Baker's yeast).